Reading from the N-terminus, the 144-residue chain is Bacilliredoxin SH1478 (144 aa).

Belongs to the bacilliredoxin family.

This chain is Bacilliredoxin SH1478, found in Staphylococcus haemolyticus (strain JCSC1435).